Reading from the N-terminus, the 589-residue chain is 2-succinyl-5-enolpyruvyl-6-hydroxy-3-cyclohexene-1-carboxylate synthase (589 aa).

This sequence belongs to the TPP enzyme family. MenD subfamily. Homodimer. Requires Mg(2+) as cofactor. It depends on Mn(2+) as a cofactor. Thiamine diphosphate is required as a cofactor.

It carries out the reaction isochorismate + 2-oxoglutarate + H(+) = 5-enolpyruvoyl-6-hydroxy-2-succinyl-cyclohex-3-ene-1-carboxylate + CO2. It participates in quinol/quinone metabolism; 1,4-dihydroxy-2-naphthoate biosynthesis; 1,4-dihydroxy-2-naphthoate from chorismate: step 2/7. The protein operates within quinol/quinone metabolism; menaquinone biosynthesis. Catalyzes the thiamine diphosphate-dependent decarboxylation of 2-oxoglutarate and the subsequent addition of the resulting succinic semialdehyde-thiamine pyrophosphate anion to isochorismate to yield 2-succinyl-5-enolpyruvyl-6-hydroxy-3-cyclohexene-1-carboxylate (SEPHCHC). The chain is 2-succinyl-5-enolpyruvyl-6-hydroxy-3-cyclohexene-1-carboxylate synthase from Myxococcus xanthus (strain DK1622).